The sequence spans 176 residues: ATP-dependent protease subunit HslV (176 aa).

Thr2 is a catalytic residue. Na(+)-binding residues include Gly157, Cys160, and Thr163.

This sequence belongs to the peptidase T1B family. HslV subfamily. A double ring-shaped homohexamer of HslV is capped on each side by a ring-shaped HslU homohexamer. The assembly of the HslU/HslV complex is dependent on binding of ATP.

It is found in the cytoplasm. It carries out the reaction ATP-dependent cleavage of peptide bonds with broad specificity.. With respect to regulation, allosterically activated by HslU binding. In terms of biological role, protease subunit of a proteasome-like degradation complex believed to be a general protein degrading machinery. This Salmonella agona (strain SL483) protein is ATP-dependent protease subunit HslV.